Here is an 84-residue protein sequence, read N- to C-terminus: GTP cyclohydrolase 1 feedback regulatory protein (84 aa).

Belongs to the GFRP family. As to quaternary structure, homopentamer. Forms a complex with GCH1 where a GCH1 homodecamer is sandwiched by two GFRP homopentamers.

It localises to the nucleus. The protein localises to the nucleus membrane. The protein resides in the cytoplasm. It is found in the cytosol. Its function is as follows. Mediates tetrahydrobiopterin inhibition of GTP cyclohydrolase 1. The polypeptide is GTP cyclohydrolase 1 feedback regulatory protein (gchfr) (Xenopus laevis (African clawed frog)).